The following is a 262-amino-acid chain: Tryptophan synthase alpha chain (262 aa).

Catalysis depends on proton acceptor residues Glu47 and Asp58.

The protein belongs to the TrpA family. As to quaternary structure, tetramer of two alpha and two beta chains.

The catalysed reaction is (1S,2R)-1-C-(indol-3-yl)glycerol 3-phosphate + L-serine = D-glyceraldehyde 3-phosphate + L-tryptophan + H2O. It functions in the pathway amino-acid biosynthesis; L-tryptophan biosynthesis; L-tryptophan from chorismate: step 5/5. Its function is as follows. The alpha subunit is responsible for the aldol cleavage of indoleglycerol phosphate to indole and glyceraldehyde 3-phosphate. The chain is Tryptophan synthase alpha chain from Chromobacterium violaceum (strain ATCC 12472 / DSM 30191 / JCM 1249 / CCUG 213 / NBRC 12614 / NCIMB 9131 / NCTC 9757 / MK).